An 861-amino-acid chain; its full sequence is Translation initiation factor IF-2 (861 aa).

Disordered stretches follow at residues 1–69 (MSDA…GESA) and 92–273 (ARAR…GREK). Residues 53–65 (GGPGGKQGGGAKG) are compositionally biased toward gly residues. A compositionally biased stretch (basic and acidic residues) spans 94-108 (ARAEAADREAQKKQD). Residues 109–120 (AAAMAQRAASEQ) show a composition bias toward low complexity. 2 stretches are compositionally biased toward basic and acidic residues: residues 121-155 (RQLE…KAEA) and 163-186 (DSGR…KRTP). Over residues 213 to 223 (PGPAAKQQPAR) the composition is skewed to low complexity. A compositionally biased stretch (basic and acidic residues) spans 255 to 273 (RAREREKQRRQDTSGGREK). Positions 357 to 527 (PRAPVIAVMG…ALQAELLDLK (171 aa)) constitute a tr-type G domain. The segment at 366-373 (GHVDHGKT) is G1. 366–373 (GHVDHGKT) serves as a coordination point for GTP. The segment at 391–395 (GITQH) is G2. Residues 413-416 (DTPG) are G3. GTP contacts are provided by residues 413–417 (DTPGH) and 467–470 (NKCD). The segment at 467 to 470 (NKCD) is G4. The interval 503–505 (SAK) is G5.

This sequence belongs to the TRAFAC class translation factor GTPase superfamily. Classic translation factor GTPase family. IF-2 subfamily.

The protein resides in the cytoplasm. In terms of biological role, one of the essential components for the initiation of protein synthesis. Protects formylmethionyl-tRNA from spontaneous hydrolysis and promotes its binding to the 30S ribosomal subunits. Also involved in the hydrolysis of GTP during the formation of the 70S ribosomal complex. The protein is Translation initiation factor IF-2 of Maricaulis maris (strain MCS10) (Caulobacter maris).